The sequence spans 1102 residues: Protein MMS22-like (1102 aa).

This sequence belongs to the MMS22 family. MMS22L subfamily.

It localises to the nucleus. It is found in the chromosome. Involved in recombination-dependent repair of stalled or collapsed replication forks. This is Protein MMS22-like from Drosophila melanogaster (Fruit fly).